We begin with the raw amino-acid sequence, 289 residues long: MGLGLWIRTGVLMAFLTALLVGIGYLIGGRGGMIIAFTIALFMNLISYWFSDSIVLSWYNARIVSEEEAPELHYIVEKLARQAGIPKPKVAIVPTMVPNAFATGRGPGNAVVAVTEGLLHLLNRDELEGVIAHEISHIKNRDTLIQTLAAVLAGAIMILVDFARWSLWFGAYDDERDSGSVIGLILAIVLAPLAATLIQLAISRSREYLADETGARISGKPHALASALMKIEEAIRYRPLRRGNPATAHMFIVNPFRGVDFAELFSTHPPTEKRIERLRKIALEMGIVF.

Transmembrane regions (helical) follow at residues 9-29 (TGVL…LIGG) and 31-51 (GGMI…YWFS). His133 provides a ligand contact to Zn(2+). Residue Glu134 is part of the active site. His137 contributes to the Zn(2+) binding site. The next 2 helical transmembrane spans lie at 143–163 (TLIQ…VDFA) and 182–202 (IGLI…QLAI). Zn(2+) is bound at residue Glu207.

The protein belongs to the peptidase M48B family. Zn(2+) serves as cofactor.

It localises to the cell membrane. The polypeptide is Protease HtpX homolog (Pyrococcus abyssi (strain GE5 / Orsay)).